A 1373-amino-acid chain; its full sequence is DNA-directed RNA polymerase subunit beta (1373 aa).

The protein belongs to the RNA polymerase beta chain family. As to quaternary structure, the RNAP catalytic core consists of 2 alpha, 1 beta, 1 beta' and 1 omega subunit. When a sigma factor is associated with the core the holoenzyme is formed, which can initiate transcription.

The catalysed reaction is RNA(n) + a ribonucleoside 5'-triphosphate = RNA(n+1) + diphosphate. Its function is as follows. DNA-dependent RNA polymerase catalyzes the transcription of DNA into RNA using the four ribonucleoside triphosphates as substrates. This chain is DNA-directed RNA polymerase subunit beta, found in Rickettsia felis (strain ATCC VR-1525 / URRWXCal2) (Rickettsia azadi).